A 381-amino-acid chain; its full sequence is Tetraacyldisaccharide 4'-kinase (381 aa).

78–85 serves as a coordination point for ATP; that stretch reads AVGGTGKT.

Belongs to the LpxK family.

It catalyses the reaction a lipid A disaccharide + ATP = a lipid IVA + ADP + H(+). Its pathway is glycolipid biosynthesis; lipid IV(A) biosynthesis; lipid IV(A) from (3R)-3-hydroxytetradecanoyl-[acyl-carrier-protein] and UDP-N-acetyl-alpha-D-glucosamine: step 6/6. Functionally, transfers the gamma-phosphate of ATP to the 4'-position of a tetraacyldisaccharide 1-phosphate intermediate (termed DS-1-P) to form tetraacyldisaccharide 1,4'-bis-phosphate (lipid IVA). This is Tetraacyldisaccharide 4'-kinase from Syntrophobacter fumaroxidans (strain DSM 10017 / MPOB).